The primary structure comprises 45 residues: Cytochrome b559 subunit beta (45 aa).

A helical transmembrane segment spans residues 20–36; that stretch reads WLAVHTLAVPTVFFLGA. His24 contacts heme.

It belongs to the PsbE/PsbF family. Heterodimer of an alpha subunit and a beta subunit. PSII is composed of 1 copy each of membrane proteins PsbA, PsbB, PsbC, PsbD, PsbE, PsbF, PsbH, PsbI, PsbJ, PsbK, PsbL, PsbM, PsbT, PsbX, PsbY, PsbZ, Psb30/Ycf12, peripheral proteins PsbO, CyanoQ (PsbQ), PsbU, PsbV and a large number of cofactors. It forms dimeric complexes. The cofactor is heme b.

The protein resides in the cellular thylakoid membrane. Functionally, this b-type cytochrome is tightly associated with the reaction center of photosystem II (PSII). PSII is a light-driven water:plastoquinone oxidoreductase that uses light energy to abstract electrons from H(2)O, generating O(2) and a proton gradient subsequently used for ATP formation. It consists of a core antenna complex that captures photons, and an electron transfer chain that converts photonic excitation into a charge separation. The chain is Cytochrome b559 subunit beta from Trichormus variabilis (strain ATCC 29413 / PCC 7937) (Anabaena variabilis).